A 309-amino-acid polypeptide reads, in one-letter code: Methionyl-tRNA formyltransferase (309 aa).

109-112 (SLLP) contacts (6S)-5,6,7,8-tetrahydrofolate.

This sequence belongs to the Fmt family.

It catalyses the reaction L-methionyl-tRNA(fMet) + (6R)-10-formyltetrahydrofolate = N-formyl-L-methionyl-tRNA(fMet) + (6S)-5,6,7,8-tetrahydrofolate + H(+). Its function is as follows. Attaches a formyl group to the free amino group of methionyl-tRNA(fMet). The formyl group appears to play a dual role in the initiator identity of N-formylmethionyl-tRNA by promoting its recognition by IF2 and preventing the misappropriation of this tRNA by the elongation apparatus. The protein is Methionyl-tRNA formyltransferase of Chloroflexus aggregans (strain MD-66 / DSM 9485).